Here is a 353-residue protein sequence, read N- to C-terminus: Phosphate acyltransferase (353 aa).

Belongs to the PlsX family. Homodimer. Probably interacts with PlsY.

It localises to the cytoplasm. The catalysed reaction is a fatty acyl-[ACP] + phosphate = an acyl phosphate + holo-[ACP]. It participates in lipid metabolism; phospholipid metabolism. Functionally, catalyzes the reversible formation of acyl-phosphate (acyl-PO(4)) from acyl-[acyl-carrier-protein] (acyl-ACP). This enzyme utilizes acyl-ACP as fatty acyl donor, but not acyl-CoA. This is Phosphate acyltransferase from Afipia carboxidovorans (strain ATCC 49405 / DSM 1227 / KCTC 32145 / OM5) (Oligotropha carboxidovorans).